The sequence spans 102 residues: Small ribosomal subunit protein uS10 (102 aa).

Belongs to the universal ribosomal protein uS10 family. In terms of assembly, part of the 30S ribosomal subunit.

In terms of biological role, involved in the binding of tRNA to the ribosomes. The chain is Small ribosomal subunit protein uS10 from Clavibacter michiganensis subsp. michiganensis (strain NCPPB 382).